We begin with the raw amino-acid sequence, 573 residues long: Urease subunit alpha 2 (573 aa).

The 439-residue stretch at 135-573 (GGMDTHVHYI…ISLNQLYFFS (439 aa)) folds into the Urease domain. Residues His-140, His-142, and Lys-223 each contribute to the Ni(2+) site. N6-carboxylysine is present on Lys-223. Position 225 (His-225) interacts with substrate. Positions 252 and 278 each coordinate Ni(2+). Catalysis depends on His-326, which acts as the Proton donor. Asp-366 is a binding site for Ni(2+).

Belongs to the metallo-dependent hydrolases superfamily. Urease alpha subunit family. As to quaternary structure, heterotrimer of UreA (gamma), UreB (beta) and UreC (alpha) subunits. Three heterotrimers associate to form the active enzyme. Requires Ni cation as cofactor. Post-translationally, carboxylation allows a single lysine to coordinate two nickel ions.

It localises to the cytoplasm. The enzyme catalyses urea + 2 H2O + H(+) = hydrogencarbonate + 2 NH4(+). It participates in nitrogen metabolism; urea degradation; CO(2) and NH(3) from urea (urease route): step 1/1. Its function is as follows. Disrupting the ure2 operon has no effect on urease activity or pathogen survival in BALB/c mice when administered orally. This Brucella abortus (strain 2308) protein is Urease subunit alpha 2.